We begin with the raw amino-acid sequence, 213 residues long: Orotate phosphoribosyltransferase (213 aa).

K26 is a binding site for 5-phospho-alpha-D-ribose 1-diphosphate. 34–35 (FF) is an orotate binding site. 5-phospho-alpha-D-ribose 1-diphosphate contacts are provided by residues 72–73 (YK), R99, K100, K103, H105, and 124–132 (DDVITAGTA). Residues T128 and R156 each contribute to the orotate site.

Belongs to the purine/pyrimidine phosphoribosyltransferase family. PyrE subfamily. In terms of assembly, homodimer. Requires Mg(2+) as cofactor.

It catalyses the reaction orotidine 5'-phosphate + diphosphate = orotate + 5-phospho-alpha-D-ribose 1-diphosphate. Its pathway is pyrimidine metabolism; UMP biosynthesis via de novo pathway; UMP from orotate: step 1/2. Its function is as follows. Catalyzes the transfer of a ribosyl phosphate group from 5-phosphoribose 1-diphosphate to orotate, leading to the formation of orotidine monophosphate (OMP). The sequence is that of Orotate phosphoribosyltransferase from Thioalkalivibrio sulfidiphilus (strain HL-EbGR7).